A 120-amino-acid polypeptide reads, in one-letter code: Large ribosomal subunit protein bL17 (120 aa).

The protein belongs to the bacterial ribosomal protein bL17 family. In terms of assembly, part of the 50S ribosomal subunit. Contacts protein L32.

The protein is Large ribosomal subunit protein bL17 of Mesomycoplasma hyopneumoniae (strain 7448) (Mycoplasma hyopneumoniae).